The sequence spans 1333 residues: Inner capsid protein VP1 (1333 aa).

A compositionally biased stretch (polar residues) spans 1–10 (MHSTTNNSNK). The interval 1-93 (MHSTTNNSNK…MDMEKAAETT (93 aa)) is disordered. Over residues 11–20 (RNNEEKHKQP) the composition is skewed to basic and acidic residues. The span at 64–82 (DGASRSGTNAKVATASSAR) shows a compositional bias: polar residues.

Belongs to the turreted BTV-fold inner capsid family. In terms of assembly, homodecamer; each decamer is made up of two conformers of VP2, called VP2A and VP2B. 12 homodecamers assemble to form an icosahedral capsid.

It localises to the virion. Functionally, inner capsid protein that self-assembles to form an icosahedral capsid with a T=2 symmetry, which consists of 120 copies of VP2, with channels at each of its five-fold vertices. This capsid constitutes the innermost concentric layer of the viral mature particle. This is Inner capsid protein VP1 (S1) from Lymantria dispar cypovirus 1 (isolate Rao) (LdCPV-1).